Here is a 234-residue protein sequence, read N- to C-terminus: Large ribosomal subunit protein uL1 (234 aa).

This sequence belongs to the universal ribosomal protein uL1 family. As to quaternary structure, part of the 50S ribosomal subunit.

Functionally, binds directly to 23S rRNA. The L1 stalk is quite mobile in the ribosome, and is involved in E site tRNA release. Protein L1 is also a translational repressor protein, it controls the translation of the L11 operon by binding to its mRNA. In Edwardsiella ictaluri (strain 93-146), this protein is Large ribosomal subunit protein uL1.